Reading from the N-terminus, the 106-residue chain is PAT complex subunit Asterix (106 aa).

A compositionally biased stretch (polar residues) spans 1 to 10; that stretch reads MSANSMSDPR. The segment at 1 to 29 is disordered; that stretch reads MSANSMSDPRSPNKVLRYKPPPSECNPAL. An N-acetylserine modification is found at Ser-2. Topologically, residues 2 to 32 are cytoplasmic; it reads SANSMSDPRSPNKVLRYKPPPSECNPALDDP. Residues 33 to 51 form a helical membrane-spanning segment; sequence TPDYMNLLGMIFSMCGLML. Position 52 (Lys-52) is a topological domain, lumenal. A helical transmembrane segment spans residues 53 to 70; it reads LKWCAWVAVYCSFISFAN. At 71-74 the chain is on the cytoplasmic side; that stretch reads SRSS. Residues 75-95 form a helical membrane-spanning segment; the sequence is EDTKQMMSSFMLSISAVVMSY. The Lumenal segment spans residues 96-106; that stretch reads LQNPQPMTPPW.

The protein belongs to the Asterix family. As to quaternary structure, component of the PAT complex, composed of WDR83OS/Asterix and CCDC47. The PAT complex is part of the multi-pass translocon (MPT) complex, composed of three subcomplexes, the GEL complex (composed of RAB5IF/OPTI and TMCO1), the BOS complex (composed of NCLN/Nicalin, NOMO1 and TMEM147) and the PAT complex (composed of WDR83OS/Asterix and CCDC47). The MPT complex associates with the SEC61 complex.

It is found in the endoplasmic reticulum membrane. In terms of biological role, component of the multi-pass translocon (MPT) complex that mediates insertion of multi-pass membrane proteins into the lipid bilayer of membranes. The MPT complex takes over after the SEC61 complex: following membrane insertion of the first few transmembrane segments of proteins by the SEC61 complex, the MPT complex occludes the lateral gate of the SEC61 complex to promote insertion of subsequent transmembrane regions. Within the MPT complex, the PAT subcomplex sequesters any highly polar regions in the transmembrane domains away from the non-polar membrane environment until they can be buried in the interior of the fully assembled protein. Within the PAT subcomplex, WDR83OS/Asterix binds to and redirects the substrate to a location behind the SEC61 complex. The protein is PAT complex subunit Asterix (WDR83OS) of Sus scrofa (Pig).